A 236-amino-acid polypeptide reads, in one-letter code: Peptidase E (236 aa).

Residues S122, D137, and H159 each act as charge relay system in the active site.

It belongs to the peptidase S51 family.

It localises to the cytoplasm. It catalyses the reaction Dipeptidase E catalyzes the hydrolysis of dipeptides Asp-|-Xaa. It does not act on peptides with N-terminal Glu, Asn or Gln, nor does it cleave isoaspartyl peptides.. Its function is as follows. Hydrolyzes dipeptides containing N-terminal aspartate residues. May play a role in allowing the cell to use peptide aspartate to spare carbon otherwise required for the synthesis of the aspartate family of amino acids. The sequence is that of Peptidase E from Shewanella oneidensis (strain ATCC 700550 / JCM 31522 / CIP 106686 / LMG 19005 / NCIMB 14063 / MR-1).